A 278-amino-acid chain; its full sequence is D-aminoacyl-tRNA deacylase (278 aa).

This sequence belongs to the DtdA deacylase family. Monomer. It depends on Zn(2+) as a cofactor.

The catalysed reaction is a D-aminoacyl-tRNA + H2O = a tRNA + a D-alpha-amino acid + H(+). It catalyses the reaction glycyl-tRNA(Ala) + H2O = tRNA(Ala) + glycine + H(+). Its function is as follows. D-aminoacyl-tRNA deacylase with broad substrate specificity. By recycling D-aminoacyl-tRNA to D-amino acids and free tRNA molecules, this enzyme counteracts the toxicity associated with the formation of D-aminoacyl-tRNA entities in vivo. The polypeptide is D-aminoacyl-tRNA deacylase (Archaeoglobus fulgidus (strain ATCC 49558 / DSM 4304 / JCM 9628 / NBRC 100126 / VC-16)).